We begin with the raw amino-acid sequence, 164 residues long: V-type proton ATPase subunit c3 (164 aa).

At 1–11 (MSTFSGDETAP) the chain is on the lumenal side. A helical transmembrane segment spans residues 12-32 (FFGFLGAAAALVFSCMGAAYG). At 33-54 (TAKSGVGVASMGVMRPELVMKS) the chain is on the cytoplasmic side. Residues 55–75 (IVPVVMAGVLGIYGLIIAVII) traverse the membrane as a helical segment. Topologically, residues 76–94 (STGINPKAKSYYLFDGYAH) are lumenal. The helical transmembrane segment at 95–116 (LSSGLACGLAGLSAGMAIGIVG) threads the bilayer. At 117 to 128 (DAGVRANAQQPK) the chain is on the cytoplasmic side. Residues 129–154 (LFVGMILILIFAEALALYGLIVGIIL) form a helical membrane-spanning segment. Topologically, residues 155 to 164 (SSRAGQSRAE) are lumenal.

This sequence belongs to the V-ATPase proteolipid subunit family. V-ATPase is a heteromultimeric enzyme composed of a peripheral catalytic V1 complex (components A to H) attached to an integral membrane V0 proton pore complex (components: a, c, c'', d and e). The proteolipid components c and c'' are present as a hexameric ring that forms the proton-conducting pore. In terms of tissue distribution, expressed in leaf, root, flower and silique.

The protein localises to the vacuole membrane. In terms of biological role, proton-conducting pore forming subunit of the membrane integral V0 complex of vacuolar ATPase. V-ATPase is responsible for acidifying a variety of intracellular compartments in eukaryotic cells. This chain is V-type proton ATPase subunit c3 (VHA-c3), found in Arabidopsis thaliana (Mouse-ear cress).